The sequence spans 295 residues: Virginiamycin B lyase (295 aa).

Histidine 227 is a binding site for substrate. Glutamate 267 is a binding site for Mg(2+). Histidine 269 (proton acceptor) is an active-site residue. Glutamate 284 is a binding site for Mg(2+).

This sequence belongs to the Vgb family. As to quaternary structure, monomer. The cofactor is Mg(2+).

Functionally, inactivates the type B streptogramin antibiotics by linearizing the lactone ring at the ester linkage, generating a free phenylglycine carboxylate and converting the threonyl moiety into 2-amino-butenoic acid. In Bacillus licheniformis (strain ATCC 14580 / DSM 13 / JCM 2505 / CCUG 7422 / NBRC 12200 / NCIMB 9375 / NCTC 10341 / NRRL NRS-1264 / Gibson 46), this protein is Virginiamycin B lyase.